Reading from the N-terminus, the 174-residue chain is Cytochrome c-type biogenesis protein CcmE (174 aa).

The Cytoplasmic segment spans residues 1–8; sequence MNPRRKSR. The helical; Signal-anchor for type II membrane protein transmembrane segment at 9 to 29 threads the bilayer; it reads LSVVLFIFLGISVASALVLYA. The Periplasmic portion of the chain corresponds to 30–174; the sequence is LRQNIDLFYT…QEKQFKEGNQ (145 aa). Residues His131 and Tyr135 each coordinate heme. Residues 149-174 form a disordered region; that stretch reads KPMGISDLKNESDRDRQEKQFKEGNQ. Residues 156 to 174 show a composition bias toward basic and acidic residues; sequence LKNESDRDRQEKQFKEGNQ.

This sequence belongs to the CcmE/CycJ family.

Its subcellular location is the cell inner membrane. Heme chaperone required for the biogenesis of c-type cytochromes. Transiently binds heme delivered by CcmC and transfers the heme to apo-cytochromes in a process facilitated by CcmF and CcmH. This Histophilus somni (strain 129Pt) (Haemophilus somnus) protein is Cytochrome c-type biogenesis protein CcmE.